A 477-amino-acid chain; its full sequence is Asparaginyl-tRNA synthetase (477 aa).

The transit peptide at 1 to 14 (MLGVRCLLRSVRFC) directs the protein to the mitochondrion. Lysine 353 bears the N6-acetyllysine mark.

The protein belongs to the class-II aminoacyl-tRNA synthetase family. Homodimer.

It localises to the mitochondrion matrix. It is found in the mitochondrion. It carries out the reaction tRNA(Asn) + L-asparagine + ATP = L-asparaginyl-tRNA(Asn) + AMP + diphosphate + H(+). Functionally, mitochondrial aminoacyl-tRNA synthetase that catalyzes the specific attachment of the asparagine amino acid (aa) to the homologous transfer RNA (tRNA), further participating in protein synthesis. The reaction occurs in a two steps: asparagine is first activated by ATP to form Asn-AMP and then transferred to the acceptor end of tRNA(Asn). This chain is Asparaginyl-tRNA synthetase, found in Homo sapiens (Human).